Consider the following 210-residue polypeptide: Tumor protein D53 homolog (210 aa).

Residues 22–73 are a coiled coil; the sequence is VTDVDFTSMISEEEKEELKAELAKLEDEISTLRQVLAAKEKHLIEIKQKLGM. Positions 185 to 197 are enriched in polar residues; it reads SSTAHASAQSSLA. Residues 185–210 form a disordered region; the sequence is SSTAHASAQSSLAGTRLPESEEELQC.

It belongs to the TPD52 family. As to quaternary structure, forms a homodimer or heterodimer with other members of the family.

The chain is Tumor protein D53 homolog (TPD52L1) from Gallus gallus (Chicken).